The chain runs to 311 residues: L-lactate dehydrogenase 2 (311 aa).

Positions 14, 35, and 40 each coordinate NAD(+). Residues arginine 90 and 122 to 125 (NPCD) each bind substrate. NAD(+) is bound by residues 120 to 122 (ATN) and threonine 145. 150-153 (DTTR) serves as a coordination point for substrate. Histidine 177 serves as the catalytic Proton acceptor. Position 230 (threonine 230) interacts with substrate.

Belongs to the LDH/MDH superfamily. LDH family. In terms of assembly, homotetramer.

The protein localises to the cytoplasm. The catalysed reaction is (S)-lactate + NAD(+) = pyruvate + NADH + H(+). It participates in fermentation; pyruvate fermentation to lactate; (S)-lactate from pyruvate: step 1/1. Catalyzes the conversion of lactate to pyruvate. The polypeptide is L-lactate dehydrogenase 2 (Listeria monocytogenes serovar 1/2a (strain ATCC BAA-679 / EGD-e)).